The sequence spans 216 residues: Protein-methionine-sulfoxide reductase heme-binding subunit MsrQ (216 aa).

5 consecutive transmembrane segments (helical) span residues 16–36 (IWAL…LGAT), 48–68 (EHLL…ITPI), 82–102 (ALGL…MVLD), 119–139 (FITI…TSNI), and 155–175 (LVYV…KVVG).

It belongs to the MsrQ family. Heterodimer of a catalytic subunit (MsrP) and a heme-binding subunit (MsrQ). FMN serves as cofactor. It depends on heme b as a cofactor.

The protein resides in the cell inner membrane. Its function is as follows. Part of the MsrPQ system that repairs oxidized periplasmic proteins containing methionine sulfoxide residues (Met-O), using respiratory chain electrons. Thus protects these proteins from oxidative-stress damage caused by reactive species of oxygen and chlorine generated by the host defense mechanisms. MsrPQ is essential for the maintenance of envelope integrity under bleach stress, rescuing a wide series of structurally unrelated periplasmic proteins from methionine oxidation. MsrQ provides electrons for reduction to the reductase catalytic subunit MsrP, using the quinone pool of the respiratory chain. This Rhizobium meliloti (strain 1021) (Ensifer meliloti) protein is Protein-methionine-sulfoxide reductase heme-binding subunit MsrQ.